Consider the following 255-residue polypeptide: EEF1A lysine methyltransferase 4 (255 aa).

Residues Trp-26 and Tyr-30 each coordinate S-adenosyl-L-methionine. Tyr-39 is modified (phosphotyrosine). S-adenosyl-L-methionine is bound by residues Trp-41, Gly-66, 88 to 89, 113 to 114, and Lys-130; these read DY and DV. The short motif at 129–134 is the Required for methyltransferase activity element; it reads EKGTLD.

Belongs to the methyltransferase superfamily.

It catalyses the reaction L-lysyl-[protein] + S-adenosyl-L-methionine = N(6)-methyl-L-lysyl-[protein] + S-adenosyl-L-homocysteine + H(+). It carries out the reaction N(6)-methyl-L-lysyl-[protein] + S-adenosyl-L-methionine = N(6),N(6)-dimethyl-L-lysyl-[protein] + S-adenosyl-L-homocysteine + H(+). The enzyme catalyses N(6),N(6)-dimethyl-L-lysyl-[protein] + S-adenosyl-L-methionine = N(6),N(6),N(6)-trimethyl-L-lysyl-[protein] + S-adenosyl-L-homocysteine + H(+). Protein-lysine methyltransferase that efficiently catalyzes three successive methylations on 'Lys-36' in eukaryotic translation elongation factor 1 alpha (EEF1A1 or EEF1A2). This chain is EEF1A lysine methyltransferase 4, found in Mus musculus (Mouse).